A 214-amino-acid polypeptide reads, in one-letter code: MSLLGFPVEWRVSDGMVDYKAALDFMTSRVDGILEGRESEMVWLLEHPSVYTAGVSAKDGELLSENKFQVVRTTRGGKYSYHGPGQRVVYVMLHLGRRDKRDVRLYVRNLGLWVVGTLAEFGIDSHFDDDNTGVWVQYSRQAKKIAAFGIAIRRWVTYHGFSVNISTDLGCYSGIVPCGIAGSHVTSLQDLGVTVPFEEFDAVLQQKFDTIFLQ.

The region spanning 36-214 (GRESEMVWLL…QQKFDTIFLQ (179 aa)) is the BPL/LPL catalytic domain. Residues 75–82 (RGGKYSYH), 147–149 (AFG), and 160–162 (GFS) contribute to the substrate site. C178 serves as the catalytic Acyl-thioester intermediate.

The protein belongs to the LipB family.

The protein localises to the cytoplasm. It catalyses the reaction octanoyl-[ACP] + L-lysyl-[protein] = N(6)-octanoyl-L-lysyl-[protein] + holo-[ACP] + H(+). Its pathway is protein modification; protein lipoylation via endogenous pathway; protein N(6)-(lipoyl)lysine from octanoyl-[acyl-carrier-protein]: step 1/2. Its function is as follows. Catalyzes the transfer of endogenously produced octanoic acid from octanoyl-acyl-carrier-protein onto the lipoyl domains of lipoate-dependent enzymes. Lipoyl-ACP can also act as a substrate although octanoyl-ACP is likely to be the physiological substrate. The chain is Octanoyltransferase from Anaplasma marginale (strain Florida).